The chain runs to 253 residues: Kojic acid related protein 1 (253 aa).

3 helical membrane passes run 23-43 (PIKFLWSGALFLGVLSIFILI), 53-73 (IFYPPVSVFVHVGLFIVYIVS), and 117-137 (ALFGFTIIIIVLYFVEIIVSV). The segment at 174-253 (FPMMSPALPS…PPPPKKAAKV (80 aa)) is disordered. 2 stretches are compositionally biased toward polar residues: residues 184–200 (GGTTQMMPTMSSRSPEF) and 226–240 (QQESSETLAPGNQPQ). Residues 242 to 253 (YFPPPPKKAAKV) are compositionally biased toward pro residues.

It localises to the membrane. Functionally, involved in mycelium growth and repression of conidia formation by affecting the expression of brlA and abaA. Acts as a negative regulation factor for kojic acid production through affecting the expression of kojA, kojR and kojT. This chain is Kojic acid related protein 1, found in Aspergillus oryzae (strain ATCC 42149 / RIB 40) (Yellow koji mold).